The chain runs to 360 residues: Protein RecA (360 aa).

65–72 (GPESSGKT) is an ATP binding site.

This sequence belongs to the RecA family.

The protein resides in the cytoplasm. Functionally, can catalyze the hydrolysis of ATP in the presence of single-stranded DNA, the ATP-dependent uptake of single-stranded DNA by duplex DNA, and the ATP-dependent hybridization of homologous single-stranded DNAs. It interacts with LexA causing its activation and leading to its autocatalytic cleavage. The chain is Protein RecA from Tolumonas auensis (strain DSM 9187 / NBRC 110442 / TA 4).